The chain runs to 405 residues: Arginine biosynthesis bifunctional protein ArgJ (405 aa).

The span at 1–18 (MTSADKNNPDTSTAQGSS) shows a compositional bias: polar residues. Residues 1 to 21 (MTSADKNNPDTSTAQGSSADL) are disordered. Residues threonine 167, lysine 189, threonine 200, glutamate 281, asparagine 400, and threonine 405 each contribute to the substrate site. Threonine 200 (nucleophile) is an active-site residue.

It belongs to the ArgJ family. As to quaternary structure, heterotetramer of two alpha and two beta chains.

It localises to the cytoplasm. It carries out the reaction N(2)-acetyl-L-ornithine + L-glutamate = N-acetyl-L-glutamate + L-ornithine. The catalysed reaction is L-glutamate + acetyl-CoA = N-acetyl-L-glutamate + CoA + H(+). It participates in amino-acid biosynthesis; L-arginine biosynthesis; L-ornithine and N-acetyl-L-glutamate from L-glutamate and N(2)-acetyl-L-ornithine (cyclic): step 1/1. Its pathway is amino-acid biosynthesis; L-arginine biosynthesis; N(2)-acetyl-L-ornithine from L-glutamate: step 1/4. Catalyzes two activities which are involved in the cyclic version of arginine biosynthesis: the synthesis of N-acetylglutamate from glutamate and acetyl-CoA as the acetyl donor, and of ornithine by transacetylation between N(2)-acetylornithine and glutamate. This chain is Arginine biosynthesis bifunctional protein ArgJ, found in Corynebacterium jeikeium (strain K411).